Consider the following 486-residue polypeptide: ATP synthase subunit beta (486 aa).

Gly-164–Thr-171 provides a ligand contact to ATP.

It belongs to the ATPase alpha/beta chains family. As to quaternary structure, F-type ATPases have 2 components, CF(1) - the catalytic core - and CF(0) - the membrane proton channel. CF(1) has five subunits: alpha(3), beta(3), gamma(1), delta(1), epsilon(1). CF(0) has four main subunits: a(1), b(1), b'(1) and c(9-12).

The protein resides in the cellular thylakoid membrane. The enzyme catalyses ATP + H2O + 4 H(+)(in) = ADP + phosphate + 5 H(+)(out). Functionally, produces ATP from ADP in the presence of a proton gradient across the membrane. The catalytic sites are hosted primarily by the beta subunits. The protein is ATP synthase subunit beta of Prochlorococcus marinus (strain MIT 9312).